The primary structure comprises 916 residues: DNA repair endonuclease XPF (916 aa).

Residues 1–457 (MESGQPARRI…EVWMKFRKED (457 aa)) are helicase-like. Leucine-zipper regions lie at residues 233–254 (LNAC…DLSL) and 270–298 (LDPL…LQYL). Lys289 is modified (N6-acetyllysine). Residues 460–487 (KRIRKSHKRPKDPQNKERASTKERTLKK) form a disordered region. Positions 470–483 (KDPQNKERASTKER) are enriched in basic and acidic residues. Positions 486-491 (KKKKRK) match the Nuclear localization signal motif. Lys500 is covalently cross-linked (Glycyl lysine isopeptide (Lys-Gly) (interchain with G-Cter in SUMO2)). Disordered regions lie at residues 502-526 (EELE…ESCP) and 660-679 (TASA…EQNG). Residue Ser521 is modified to Phosphoserine. Residues 658–813 (RGTASADVST…PSPHATAELF (156 aa)) form a nuclease region. The 81-residue stretch at 683-763 (SIVVDMREFR…RPVLLIEFDP (81 aa)) folds into the ERCC4 domain. Ser764 carries the post-translational modification Phosphoserine. The tract at residues 837 to 905 (TLPESEKYNP…QLYDFIHTSF (69 aa)) is hhH2, dimerization with ERCC1. Residue Lys911 is modified to N6-acetyllysine.

The protein belongs to the XPF family. In terms of assembly, heterodimer composed of ERCC1 and ERCC4/XPF. Interacts with SLX4/BTBD12; this interaction is direct and links the ERCC1-ERCC4/XPF complex to SLX4, which may coordinate the action of the structure-specific endonuclease during DNA repair. It depends on Mg(2+) as a cofactor. In terms of processing, acetylation at Lys-911 by KAT5 promotes interaction with ERCC1 by disrupting a salt bridge between Glu-907 and Lys-911, thereby exposing a second binding site for ERCC1. Deacetylated by SIRT1.

Its subcellular location is the nucleus. It localises to the chromosome. Functionally, catalytic component of a structure-specific DNA repair endonuclease responsible for the 5-prime incision during DNA repair, and which is essential for nucleotide excision repair (NER) and interstrand cross-link (ICL) repair. The sequence is that of DNA repair endonuclease XPF from Homo sapiens (Human).